The primary structure comprises 589 residues: PTS system mannitol-specific EIICB component (589 aa).

Residues 1 to 25 (MEEKVSLKVRVQKLGTSLSNMVMPN) are Cytoplasmic-facing. The region spanning 14–347 (LGTSLSNMVM…LHADKSTEDS (334 aa)) is the PTS EIIC type-2 domain. The helical transmembrane segment at 26 to 47 (IGAFIAWGVLTALFIADGYLPN) threads the bilayer. The Extracellular portion of the chain corresponds to 48-51 (EQLA). The chain crosses the membrane as a helical span at residues 52–72 (TVVGPMLTYLLPILIGYTGGY). Over 73–135 (MIHGQRGAVV…PGFEMLVNNF (63 aa)) the chain is Cytoplasmic. A helical membrane pass occupies residues 136–157 (SAGLVGFALLLLAFYAIGPVVS). The Extracellular segment spans residues 158-166 (TLTGAVGNG). A helical membrane pass occupies residues 167 to 187 (VEAIVNARLLPMANIIIEPAK). At 188 to 274 (VLFLNNALNH…VMMKPTLFLA (87 aa)) the chain is on the cytoplasmic side. A helical membrane pass occupies residues 275-294 (AMAGGISGTFTFQLLDAGLK). Topologically, residues 295 to 316 (SPASPGSIIAIMATAPKGVWPH) are extracellular. A helical membrane pass occupies residues 317 to 338 (LNILLGVLVAAVVSFLIAALIL). Topologically, residues 339–589 (HADKSTEDSL…YDKMAARMYK (251 aa)) are cytoplasmic. One can recognise a PTS EIIB type-2 domain in the interval 381-476 (EKIIFACDAG…SLTGASPIAE (96 aa)). Cys-387 (phosphocysteine intermediate; for EIIB activity) is an active-site residue. At Cys-387 the chain carries Phosphocysteine; by EIIA.

In terms of assembly, homodimer.

The protein localises to the cell membrane. It carries out the reaction D-mannitol(out) + N(pros)-phospho-L-histidyl-[protein] = D-mannitol 1-phosphate(in) + L-histidyl-[protein]. Functionally, the phosphoenolpyruvate-dependent sugar phosphotransferase system (sugar PTS), a major carbohydrate active transport system, catalyzes the phosphorylation of incoming sugar substrates concomitantly with their translocation across the cell membrane. The enzyme II CmtAB PTS system is involved in D-mannitol transport. This is PTS system mannitol-specific EIICB component (mtlA) from Streptococcus pneumoniae (strain ATCC BAA-255 / R6).